The chain runs to 259 residues: 4-hydroxy-tetrahydrodipicolinate reductase (259 aa).

Residue 9-14 participates in NAD(+) binding; sequence GANGRM. Arg37 is a binding site for NADP(+). NAD(+) is bound by residues 92–94 and 116–119; these read GTT and ASNM. Catalysis depends on His149, which acts as the Proton donor/acceptor. His150 provides a ligand contact to (S)-2,3,4,5-tetrahydrodipicolinate. Residue Lys153 is the Proton donor of the active site. 159-160 serves as a coordination point for (S)-2,3,4,5-tetrahydrodipicolinate; that stretch reads GT.

The protein belongs to the DapB family.

It is found in the cytoplasm. The catalysed reaction is (S)-2,3,4,5-tetrahydrodipicolinate + NAD(+) + H2O = (2S,4S)-4-hydroxy-2,3,4,5-tetrahydrodipicolinate + NADH + H(+). It catalyses the reaction (S)-2,3,4,5-tetrahydrodipicolinate + NADP(+) + H2O = (2S,4S)-4-hydroxy-2,3,4,5-tetrahydrodipicolinate + NADPH + H(+). Its pathway is amino-acid biosynthesis; L-lysine biosynthesis via DAP pathway; (S)-tetrahydrodipicolinate from L-aspartate: step 4/4. Its function is as follows. Catalyzes the conversion of 4-hydroxy-tetrahydrodipicolinate (HTPA) to tetrahydrodipicolinate. The sequence is that of 4-hydroxy-tetrahydrodipicolinate reductase from Desulfovibrio desulfuricans (strain ATCC 27774 / DSM 6949 / MB).